The following is a 383-amino-acid chain: Queuine tRNA-ribosyltransferase (383 aa).

Catalysis depends on D92, which acts as the Proton acceptor. Residues 92 to 96 (DSGGF), D146, Q190, and G217 contribute to the substrate site. The segment at 248 to 254 (GVGKPED) is RNA binding. D267 functions as the Nucleophile in the catalytic mechanism. An RNA binding; important for wobble base 34 recognition region spans residues 272-276 (TRNAR). Residues C310, C312, C315, and H341 each contribute to the Zn(2+) site.

Belongs to the queuine tRNA-ribosyltransferase family. Homodimer. Within each dimer, one monomer is responsible for RNA recognition and catalysis, while the other monomer binds to the replacement base PreQ1. The cofactor is Zn(2+).

The catalysed reaction is 7-aminomethyl-7-carbaguanine + guanosine(34) in tRNA = 7-aminomethyl-7-carbaguanosine(34) in tRNA + guanine. The protein operates within tRNA modification; tRNA-queuosine biosynthesis. Catalyzes the base-exchange of a guanine (G) residue with the queuine precursor 7-aminomethyl-7-deazaguanine (PreQ1) at position 34 (anticodon wobble position) in tRNAs with GU(N) anticodons (tRNA-Asp, -Asn, -His and -Tyr). Catalysis occurs through a double-displacement mechanism. The nucleophile active site attacks the C1' of nucleotide 34 to detach the guanine base from the RNA, forming a covalent enzyme-RNA intermediate. The proton acceptor active site deprotonates the incoming PreQ1, allowing a nucleophilic attack on the C1' of the ribose to form the product. After dissociation, two additional enzymatic reactions on the tRNA convert PreQ1 to queuine (Q), resulting in the hypermodified nucleoside queuosine (7-(((4,5-cis-dihydroxy-2-cyclopenten-1-yl)amino)methyl)-7-deazaguanosine). The polypeptide is Queuine tRNA-ribosyltransferase (Psychrobacter cryohalolentis (strain ATCC BAA-1226 / DSM 17306 / VKM B-2378 / K5)).